A 312-amino-acid polypeptide reads, in one-letter code: Ribosomal protein L11 methyltransferase (312 aa).

S-adenosyl-L-methionine is bound by residues T162, G183, D205, and N248.

Belongs to the methyltransferase superfamily. PrmA family.

It localises to the cytoplasm. The enzyme catalyses L-lysyl-[protein] + 3 S-adenosyl-L-methionine = N(6),N(6),N(6)-trimethyl-L-lysyl-[protein] + 3 S-adenosyl-L-homocysteine + 3 H(+). In terms of biological role, methylates ribosomal protein L11. In Bacillus cereus (strain ATCC 10987 / NRS 248), this protein is Ribosomal protein L11 methyltransferase.